Here is a 304-residue protein sequence, read N- to C-terminus: Homoserine kinase (304 aa).

Pro-90–Ser-100 contacts ATP.

It belongs to the GHMP kinase family. Homoserine kinase subfamily.

The protein resides in the cytoplasm. It carries out the reaction L-homoserine + ATP = O-phospho-L-homoserine + ADP + H(+). The protein operates within amino-acid biosynthesis; L-threonine biosynthesis; L-threonine from L-aspartate: step 4/5. Its function is as follows. Catalyzes the ATP-dependent phosphorylation of L-homoserine to L-homoserine phosphate. The chain is Homoserine kinase from Staphylococcus aureus (strain NCTC 8325 / PS 47).